Consider the following 495-residue polypeptide: Glycerol kinase (495 aa).

Thr-11 lines the ADP pocket. Residues Thr-11, Thr-12, and Ser-13 each coordinate ATP. Thr-11 is a binding site for sn-glycerol 3-phosphate. Arg-15 serves as a coordination point for ADP. 4 residues coordinate sn-glycerol 3-phosphate: Arg-81, Glu-82, Tyr-133, and Asp-242. Arg-81, Glu-82, Tyr-133, Asp-242, and Gln-243 together coordinate glycerol. Residues Thr-264 and Gly-307 each contribute to the ADP site. ATP contacts are provided by Thr-264, Gly-307, Gln-311, and Gly-410. Residue Gly-410 coordinates ADP.

This sequence belongs to the FGGY kinase family.

The enzyme catalyses glycerol + ATP = sn-glycerol 3-phosphate + ADP + H(+). It functions in the pathway polyol metabolism; glycerol degradation via glycerol kinase pathway; sn-glycerol 3-phosphate from glycerol: step 1/1. Inhibited by fructose 1,6-bisphosphate (FBP). Key enzyme in the regulation of glycerol uptake and metabolism. Catalyzes the phosphorylation of glycerol to yield sn-glycerol 3-phosphate. This is Glycerol kinase from Roseobacter denitrificans (strain ATCC 33942 / OCh 114) (Erythrobacter sp. (strain OCh 114)).